Reading from the N-terminus, the 64-residue chain is Large ribosomal subunit protein bL35 (64 aa).

The disordered stretch occupies residues 1-25 (MPKLKTHSGAAKRFKKTATGKVKRS).

The protein belongs to the bacterial ribosomal protein bL35 family.

The chain is Large ribosomal subunit protein bL35 from Koribacter versatilis (strain Ellin345).